The following is a 522-amino-acid chain: Lysine--tRNA ligase (522 aa).

The short motif at 44–52 (PSGLPHIGT) is the 'HIGH' region element. Residues 290–294 (KISKS) carry the 'KMSKS' region motif. Lys-293 contacts ATP.

The protein belongs to the class-I aminoacyl-tRNA synthetase family.

Its subcellular location is the cytoplasm. The enzyme catalyses tRNA(Lys) + L-lysine + ATP = L-lysyl-tRNA(Lys) + AMP + diphosphate. This chain is Lysine--tRNA ligase, found in Rickettsia peacockii (strain Rustic).